The chain runs to 148 residues: Ribosome-binding factor A (148 aa).

The interval 120 to 148 (AKAREGASYAGDADPYRTAEPDADDAPRA) is disordered. A compositionally biased stretch (basic and acidic residues) spans 133-148 (DPYRTAEPDADDAPRA).

This sequence belongs to the RbfA family. Monomer. Binds 30S ribosomal subunits, but not 50S ribosomal subunits or 70S ribosomes.

Its subcellular location is the cytoplasm. Functionally, one of several proteins that assist in the late maturation steps of the functional core of the 30S ribosomal subunit. Associates with free 30S ribosomal subunits (but not with 30S subunits that are part of 70S ribosomes or polysomes). Required for efficient processing of 16S rRNA. May interact with the 5'-terminal helix region of 16S rRNA. The chain is Ribosome-binding factor A from Micrococcus luteus (strain ATCC 4698 / DSM 20030 / JCM 1464 / CCM 169 / CCUG 5858 / IAM 1056 / NBRC 3333 / NCIMB 9278 / NCTC 2665 / VKM Ac-2230) (Micrococcus lysodeikticus).